The following is a 625-amino-acid chain: Probable potassium transport system protein Kup (625 aa).

The next 12 helical transmembrane spans lie at 10 to 30 (LAAL…TSPL), 50 to 70 (LLGV…LKYV), 102 to 122 (YFPL…DSVI), 135 to 155 (LGVA…AILV), 172 to 192 (FGPV…VNII), 214 to 234 (GFLA…AEAL), 251 to 271 (FLIA…LLLL), 284 to 304 (LGAW…IIAS), 340 to 360 (IYIP…VIGF), 369 to 389 (AYGI…FFVI), 397 to 417 (LILC…LFSA), and 422 to 442 (LFHG…LMLT).

Belongs to the HAK/KUP transporter (TC 2.A.72) family.

It localises to the cell inner membrane. The catalysed reaction is K(+)(in) + H(+)(in) = K(+)(out) + H(+)(out). Transport of potassium into the cell. Likely operates as a K(+):H(+) symporter. The polypeptide is Probable potassium transport system protein Kup (Herminiimonas arsenicoxydans).